The sequence spans 456 residues: Myricetin 3-O-rhamnosyltransferase UGT77B2 (456 aa).

H19 serves as the catalytic Proton acceptor. An anthocyanidin is bound at residue H19. The active-site Charge relay is the D116. An an anthocyanidin-binding site is contributed by H147. Residues T279, A334, H351, N355, and E359 each contribute to the UDP-beta-L-rhamnose site. A374 is an an anthocyanidin binding site.

It belongs to the UDP-glycosyltransferase family. As to expression, expressed in young cromes.

It carries out the reaction myricetin + UDP-beta-L-rhamnose = myricetin 3-O-alpha-L-rhamnoside + UDP + H(+). Its pathway is flavonoid metabolism. Its function is as follows. Rhamnosyltransferase involved in montbretin A (MbA) biosynthesis. Catalyzes the 3-O rhamnosylation of myricetin to produce myricetin 3-O-alpha-L-rhamnoside (MR), a precursor of MbA. MbA is a potent inhibitor of human pancreatic alpha-amylase and is being developed as drug candidate to treat type-2 diabetes. In vitro, is able to transfer UDP-glucose and UDP-xylose with 50-fold less efficiency compared with UDP-rhamnose. In vitro, can use kaempferol or quercetin as substrates, although these two flavonols may not be physiological substrates in vivo. The polypeptide is Myricetin 3-O-rhamnosyltransferase UGT77B2 (Crocosmia x crocosmiiflora (Montbretia)).